Consider the following 378-residue polypeptide: P2X receptor A (378 aa).

Residues 1-27 (MGFSFDWDDIFQYSTVKIVRIRDRRLG) are Cytoplasmic-facing. A helical membrane pass occupies residues 28–48 (ILHLSFLVGIVAYIVVYSAII). Over 49 to 307 (KKGYLFTEVP…IQTGTIGSFH (259 aa)) the chain is Lumenal. Positions 290 to 303 (RHGIRVIFIQTGTI) are pore-forming motif. Residues 308–328 (FQTLLLTLVSGLGLLAVATTV) traverse the membrane as a helical segment. The Cytoplasmic segment spans residues 329–378 (VDQLAIRLLPQRKSYSSLKFQVTESMSNPMKKRITTDEGEDVLYTRIEGL).

It belongs to the P2X receptor family.

Its subcellular location is the contractile vacuole membrane. P2X receptors are ATP-gated ion channels that play a role in intracellular calcium signaling. Not required for the purinergic response to extracellular nucleotides. Inward currents evoked by intracellular ATP and ATP analogs. Exclusively selective for ATP over other nucleotides. Insensitive to P2 receptor antagonists PPADS, suramin and 2',3'-O-(2,4,6-trinitrophenyl)-ATP but inhibited by nanomolar concentrations of copper and sodium ion. More permeable to ammonium than either sodium or potassium ions and less permeable to choline. It has been reported that p2xA is not essential for osmoregulation, however this information is in contradiction with another source which indicates that p2xA is required for osmoregulation. Found to be permeable to chloride ions. Inhibited by copper and sodium ions. This is P2X receptor A (p2xA) from Dictyostelium discoideum (Social amoeba).